Reading from the N-terminus, the 105-residue chain is Putative toxin MazF8 (105 aa).

Forms a complex with cognate antitoxin MazE8.

Its function is as follows. Putative toxic component of a type II toxin-antitoxin (TA) system. Acts as an endoribonuclease. Neutralized by coexpression with cognate antitoxin MazE8. The polypeptide is Putative toxin MazF8 (mazF8) (Mycobacterium tuberculosis (strain CDC 1551 / Oshkosh)).